The sequence spans 585 residues: MTPTLSSSADVLPSLSNMSSETNLLPIQQIAPQLGLSADDLIPYGHHMAKVDISALRPSGPQGKLILVSSITPTPLGEGKTVTTIGLSQGINRLGYRGVACIRQPSLGPVFGVKGGAAGGGAAQVLPMEKLNLHLTGDIHAISAAHNLAAAALDARLYHEQRLGAVFSQQTGMPLLNIDAQQILWPRVVDHNDRALRHIQVGVGGGTHGVERHDHVEITAASELMAILALSESLHDMRQRIGRIILAHSTSGQAITADDLGVAGAMTALMKETIHPTLMQTSEQTPVLIHAGPFANIAHGNSSVLADRLGLQLADYVVTEAGFGSDMGMEKFFNIKYRQSGITPSCVVLVATLRSLKANSGVFDIKPGQPLPAEILNTNIPLLSQGCANLKWHINNAKSYGLPVVVAVNCFPDDSPEELAFLADYALSAGAIACEISEAFAKGGAGTTALAQRVIDACAHASPPVLAYPDNASLEQKIEILAQRYGAREVTFTPQARQQLDSITAAGFGHLPLCIAKTPLSISADASLKNVPHDFVLPVTACAVSAGAGFVRIYAGDIMTMPGLGTQPAYYHIDIDDEGCIRGLS.

An ATP-binding site is contributed by 74-81 (TPLGEGKT).

This sequence belongs to the formate--tetrahydrofolate ligase family.

The enzyme catalyses (6S)-5,6,7,8-tetrahydrofolate + formate + ATP = (6R)-10-formyltetrahydrofolate + ADP + phosphate. It functions in the pathway one-carbon metabolism; tetrahydrofolate interconversion. The chain is Formate--tetrahydrofolate ligase from Yersinia enterocolitica serotype O:8 / biotype 1B (strain NCTC 13174 / 8081).